The chain runs to 310 residues: Protein YIP5 (310 aa).

The tract at residues 1 to 84 (MPSNNSSFLD…VIGQNDNDGL (84 aa)) is disordered. Residues 10–22 (DIDDDLEGVDDFG) are compositionally biased toward acidic residues. Polar residues predominate over residues 35-57 (DSPNMNNSTAGKGSEFYNTTGSK). Ser-60 bears the Phosphoserine mark. A run of 5 helical transmembrane segments spans residues 131–151 (TDLY…FTMS), 181–201 (LHSI…TMQV), 220–240 (LISV…ILNI), 249–269 (TVQA…SYFL), and 290–310 (SIIV…FIIF).

Belongs to the YIP1 family. As to quaternary structure, interacts with SNX3, TVP18, TVP23, YIP1 and YIP4. Interacts with SEC4; The C-terminal cysteines in the Rab GTPase SEC4 are essential for the interaction. Interacts with YPT1, YPT6, YPT7, YPT10, YPT11, YPT31, YPT32 and YPT52; These proteins are all Rab GTPases.

It localises to the membrane. Functionally, possible role in vesicle-mediated transport. May be involved in proper membrane localization of Rab GTPases. The sequence is that of Protein YIP5 (YIP5) from Saccharomyces cerevisiae (strain ATCC 204508 / S288c) (Baker's yeast).